Reading from the N-terminus, the 397-residue chain is Dual specificity mitogen-activated protein kinase kinase 2 (397 aa).

Positions 1–21 (MAPKRRPVPLIIAPTGEGQST) are disordered. Residues 69-366 (FDPICELGAG…LKMLMGHTFI (298 aa)) enclose the Protein kinase domain. Residues 75–83 (LGAGNGGVV) and Lys98 each bind ATP. Asp191 acts as the Proton acceptor in catalysis. Residues Ser219 and Ser223 each carry the phosphoserine; by RAF modification. A disordered region spans residues 284 to 306 (GGAEGHSMSPRQRPPGRPVSGHG).

This sequence belongs to the protein kinase superfamily. STE Ser/Thr protein kinase family. MAP kinase kinase subfamily. In terms of processing, phosphorylation on Ser/Thr by MAP kinase kinase kinases (RAF) positively regulates the kinase activity.

It carries out the reaction L-seryl-[protein] + ATP = O-phospho-L-seryl-[protein] + ADP + H(+). The catalysed reaction is L-threonyl-[protein] + ATP = O-phospho-L-threonyl-[protein] + ADP + H(+). It catalyses the reaction L-tyrosyl-[protein] + ATP = O-phospho-L-tyrosyl-[protein] + ADP + H(+). Functionally, catalyzes the concomitant phosphorylation of a threonine and a tyrosine residue in a Thr-Glu-Tyr sequence located in MAP kinases. In Cyprinus carpio (Common carp), this protein is Dual specificity mitogen-activated protein kinase kinase 2 (map2k2).